The chain runs to 348 residues: MDKTYTIAIDAMGGDNAPEEIVKGALLARDKYKNLHLNLYGDKGKILELIGETKQDRIKIINTTEMIEMGEEPVKAVRKKKDSSMVVATNAVKGGSADALFSAGNTGALLASGIFIVGRISGIERPGLLTVLPSVDDPKRQWVFMDVGANAEVKPSYLYQFAVLGNFYATHVLKKPNPEVKLLNNGTEEDKGDKIHIQAYQLLKNGKQLNFTGNIESRELLNGHADVVVADGFSGNAALKAIEGTALTMFAGLRKILVNGSLKTKIGAALVKPALKEFSSVLDYNNAGGAVIAGVKAPVVKTHGSAKAKTVSNTIGQIKIMLESNLVPDITKYVDENKDQFKIILEEK.

It belongs to the PlsX family. Homodimer. Probably interacts with PlsY.

The protein localises to the cytoplasm. The enzyme catalyses a fatty acyl-[ACP] + phosphate = an acyl phosphate + holo-[ACP]. It participates in lipid metabolism; phospholipid metabolism. Functionally, catalyzes the reversible formation of acyl-phosphate (acyl-PO(4)) from acyl-[acyl-carrier-protein] (acyl-ACP). This enzyme utilizes acyl-ACP as fatty acyl donor, but not acyl-CoA. The polypeptide is Phosphate acyltransferase (Oenococcus oeni (strain ATCC BAA-331 / PSU-1)).